Here is an 802-residue protein sequence, read N- to C-terminus: MRALWVLGLCCVLLTFGSARADDEVDVDGTVEEDLGKSREGSRTDDEVVQREEEAIQLDGLNASQIRELREKSEKFAFQAEVNRMMKLIINSLYKNKEIFLRELISNASDALDKIRLISLTDEQALSGNEELTVKIKCDKEKNLLHVTDTGVGMTREELVKNLGTIAKSGTSEFLNKMTEAQEDGQSTSELIGQFGVGFYSAFLVADKVIVTSKHNNDTQHIWESDSNEFSVIADPRGNTLGRGTTITLVLKEEASDYLELDTIKNLVKKYSQFINFPIYVWSSKTETVEEPAEEEEAAKEEKEEADDEAAVEEEEEEKKPKTKKVEKTVWDWELMNDIKPIWQRPSKEVEEDEYKAFYKSFSKESDDPMAYIHFTAEGEVTFKSILFVPTSAPRGLFDEYGSKKSDYIKLYVRRVFITDDFHDMMPKYLNFVKGVVDSDDLPLNVSRETLQQHKLLKVIRKKLVRKTLDMIKKIADEKYNDTFWKEFGTNIKLGVIEDHSNRTRLAKLLRFQSSHHPTDITSLDQYVERMKEKQDKIYFMAGASRKEAESSPFVERLLKKGYEVIYLTEPVDEYCIQALPEFDGKRFQNVAKEGVKFDESEKTKESREATEKEFEPLLNWMKDKALKDKIEKAVVSQRLTESPCALVASQYGWSGNMERIMKAQAYQTGKDISTNYYASQKKTFEINPRHPLIRDMLRRIKEDEDDKTVMDLAVVLFETATLRSGYLLPDTKAYGDRIERMLRLSLNIDPDAKVEEEPEEEPEDTTEDTEQDEEEEMDAGTDEEEQEQEPEKKSTAEKDEL.

A signal peptide spans 1–21 (MRALWVLGLCCVLLTFGSARA). Residues 42–44 (SRT) carry the SRT pseudosubstrate motif motif. N-linked (GlcNAc...) asparagine glycosylation is present at Asn-62. Ser-64 carries the post-translational modification Phosphoserine. A glycan (N-linked (GlcNAc...) asparagine) is linked at Asn-107. Residues Asn-107, Asp-149, and Asn-162 each coordinate ATP. Lys-168 is subject to N6-(2-hydroxyisobutyryl)lysine. Residue Ser-172 is modified to Phosphoserine. An ATP-binding site is contributed by Phe-199. N-linked (GlcNAc...) asparagine glycosylation is present at Asn-217. The segment at 288–323 (TVEEPAEEEEAAKEEKEEADDEAAVEEEEEEKKPKT) is disordered. Acidic residues predominate over residues 289–317 (VEEPAEEEEAAKEEKEEADDEAAVEEEEE). Ser-403 carries the post-translational modification Phosphoserine. At Lys-404 the chain carries N6-succinyllysine. An N-linked (GlcNAc...) asparagine glycan is attached at Asn-445. Phosphoserine is present on Ser-447. At Lys-479 the chain carries N6-acetyllysine. N-linked (GlcNAc...) asparagine glycans are attached at residues Asn-481 and Asn-502. At Lys-633 the chain carries N6-succinyllysine. The interval 750-802 (DPDAKVEEEPEEEPEDTTEDTEQDEEEEMDAGTDEEEQEQEPEKKSTAEKDEL) is disordered. Positions 757 to 789 (EEPEEEPEDTTEDTEQDEEEEMDAGTDEEEQEQ) are enriched in acidic residues. Thr-782 carries the post-translational modification Phosphothreonine. Residues 790-802 (EPEKKSTAEKDEL) show a composition bias toward basic and acidic residues. Positions 799–802 (KDEL) match the Prevents secretion from ER motif.

This sequence belongs to the heat shock protein 90 family. In terms of assembly, homodimer; disulfide-linked. Component of an EIF2 complex at least composed of CELF1/CUGBP1, CALR, CALR3, EIF2S1, EIF2S2, HSP90B1 and HSPA5. Part of a large chaperone multiprotein complex comprising DNAJB11, HSP90B1, HSPA5, HYOU, PDIA2, PDIA4, PDIA6, PPIB, SDF2L1, UGGT1 and very small amounts of ERP29, but not, or at very low levels, CALR nor CANX. Interacts with AIMP1; regulates its retention in the endoplasmic reticulum. Hyperglycosylated form interacts with OS9; promoting its degradation by the endoplasmic reticulum associated degradation (ERAD). Interacts with CNPY3. This interaction is disrupted in the presence of ATP. Interacts with TLR4 and TLR9, but not with TLR3. Interacts with MZB1 in a calcium-dependent manner. Interacts with METTL23. Interacts with IL1B; the interaction facilitates cargo translocation into the ERGIC. Interacts with EIF2AK3. Post-translationally, phosphorylated by CK2. In terms of processing, N-glycosylated cotranslationally at Asn-217 by STT3A-containing OST-A complex: this glycosylation is constitutive. In response to various stress, 5 additional facultative sites (Asn-62, Asn-107, Asn-445, Asn-481 and Asn-502) can be glycosylated post-translationally by STT3B-containing OST-B complex, leading to a hyperglycosylated form that is degraded by the ER-associated degradation (ERAD) pathway. In normal conditions, the OST-A complex together with CCDC134 prevent glycosylation at facultative sites during protein folding, thereby preventing hyperglycosylation. Mechanistically, nascent HSP90B1 is tethered during translation to a specialized CCDC134-containing translocon that forms a microenvironment for its folding, in which STT3A associates with the SRT pseudosubstrate motif, and prevents access to facultative glycosylation sites until folding is completed, rendering its facultative sites inaccessible to the OST-B complex.

The protein localises to the endoplasmic reticulum lumen. The protein resides in the sarcoplasmic reticulum lumen. It localises to the melanosome. The catalysed reaction is ATP + H2O = ADP + phosphate + H(+). In terms of biological role, ATP-dependent chaperone involved in the processing of proteins in the endoplasmic reticulum, regulating their transport. Together with MESD, acts as a modulator of the Wnt pathway by promoting the folding of LRP6, a coreceptor of the canonical Wnt pathway. When associated with CNPY3, required for proper folding of Toll-like receptors. Promotes folding and trafficking of TLR4 to the cell surface. May participate in the unfolding of cytosolic leaderless cargos (lacking the secretion signal sequence) such as the interleukin 1/IL-1 to facilitate their translocation into the ERGIC (endoplasmic reticulum-Golgi intermediate compartment) and secretion; the translocation process is mediated by the cargo receptor TMED10. This Oryctolagus cuniculus (Rabbit) protein is Endoplasmin (HSP90B1).